The primary structure comprises 192 residues: Ion-translocating oxidoreductase complex subunit B (192 aa).

Residues Met1–Ser26 form a hydrophobic region. The region spanning Glu32–Val91 is the 4Fe-4S domain. Cys49, Cys52, Cys57, Cys74, Cys117, Cys120, Cys123, Cys127, Cys147, Cys150, Cys153, and Cys157 together coordinate [4Fe-4S] cluster. 4Fe-4S ferredoxin-type domains follow at residues Met108–Arg137 and Ala138–Val167.

The protein belongs to the 4Fe4S bacterial-type ferredoxin family. RnfB subfamily. As to quaternary structure, the complex is composed of six subunits: RsxA, RsxB, RsxC, RsxD, RsxE and RsxG. Requires [4Fe-4S] cluster as cofactor.

The protein resides in the cell inner membrane. In terms of biological role, part of a membrane-bound complex that couples electron transfer with translocation of ions across the membrane. Required to maintain the reduced state of SoxR. The chain is Ion-translocating oxidoreductase complex subunit B from Salmonella newport (strain SL254).